The primary structure comprises 250 residues: Small ribosomal subunit protein uS2 (250 aa).

This sequence belongs to the universal ribosomal protein uS2 family.

This Variovorax paradoxus (strain S110) protein is Small ribosomal subunit protein uS2.